The sequence spans 384 residues: Substance-K receptor (384 aa).

Residues M1–Q32 are Extracellular-facing. 3 N-linked (GlcNAc...) asparagine glycosylation sites follow: N11, N18, and N19. The chain crosses the membrane as a helical span at residues L33–W56. The Cytoplasmic segment spans residues I57 to N69. The helical transmembrane segment at Y70–N90 threads the bilayer. Topologically, residues F91–H107 are extracellular. C106 and C181 form a disulfide bridge. The chain crosses the membrane as a helical span at residues F108–A129. Over D130–R149 the chain is Cytoplasmic. A helical transmembrane segment spans residues A150 to S170. The Extracellular segment spans residues T171 to L196. Residues Y197–S218 traverse the membrane as a helical segment. Residues V219–T251 are Cytoplasmic-facing. A helical membrane pass occupies residues M252 to L272. Topologically, residues G273–L290 are extracellular. A helical membrane pass occupies residues A291–L310. Over N311–P384 the chain is Cytoplasmic. C324 carries the S-palmitoyl cysteine lipid modification.

This sequence belongs to the G-protein coupled receptor 1 family.

The protein resides in the cell membrane. In terms of biological role, this is a receptor for the tachykinin neuropeptide substance K (neurokinin A). It is associated with G proteins that activate a phosphatidylinositol-calcium second messenger system. In Canis lupus familiaris (Dog), this protein is Substance-K receptor (TACR2).